The sequence spans 73 residues: Cx9C motif-containing protein 4, mitochondrial (73 aa).

A CHCH domain is found at 2–44 (SNPCQKEACAIQDCLLSHQYDDAKCAKVIDQLYICCSKFYNDN). Short sequence motifs (cx9C motif) lie at residues 5–15 (CQKEACAIQDC) and 26–36 (CAKVIDQLYIC). 2 disulfide bridges follow: Cys-5–Cys-36 and Cys-15–Cys-26.

This sequence belongs to the CMC4 family.

Its subcellular location is the mitochondrion intermembrane space. This chain is Cx9C motif-containing protein 4, mitochondrial (CMC4), found in Saccharomyces cerevisiae (strain ATCC 204508 / S288c) (Baker's yeast).